A 269-amino-acid chain; its full sequence is 4-hydroxy-4-methyl-2-oxoglutarate aldolase cghB (269 aa).

The active-site Proton acceptor is H48. Residues E155 and D181 each contribute to the a divalent metal cation site. D181 is a substrate binding site.

It belongs to the HpcH/HpaI aldolase family. As to quaternary structure, homohexamer; trimer of dimers. Co(2+) serves as cofactor. Mn(2+) is required as a cofactor. It depends on Zn(2+) as a cofactor. The cofactor is Fe(2+). Requires Mg(2+) as cofactor.

The enzyme catalyses 4-hydroxy-4-methyl-2-oxoglutarate = 2 pyruvate. It participates in secondary metabolite biosynthesis. 4-hydroxy-4-methyl-2-oxoglutarate aldolase; part of the gene cluster that mediates the biosynthesis of the tetramic acid Sch210972, a potential anti-HIV fungal natural product that contains a decalin core. The PKS module of cghG together with the enoylreductase cghC catalyze the formation of the polyketide unit which is then conjugated to 4-hydroxyl-4-methyl glutamate (HMG) by the condensation domain of the cghG NRPS module. One unique structural feature of Sch210972 is the tetramic acid motif proposed to be derived from the non-proteinogenic amino acid HMG, by a Dieckmann-type condensation catalyzed by the reductase domain of cghG. The aldolase cghB catalyzes the aldol condensation of 2 molecules of pyruvic acid to yield the intermediate 4-hydroxyl-4-methyl-2-oxoglutarate (HMOG), which can then be stereoselectively transaminated by an unidentified enzyme to form HMG. The Diels-Alderase cghA then uses the Dieckmann product released by cghG as substrate and catalyzes the Diels-Alder cycloaddition to form the decalin ring of Sch210972. CghA also suppresses the nonenzymatic formation of the alternative stereoisomer. The chain is 4-hydroxy-4-methyl-2-oxoglutarate aldolase cghB from Chaetomium globosum (strain ATCC 6205 / CBS 148.51 / DSM 1962 / NBRC 6347 / NRRL 1970) (Soil fungus).